The chain runs to 618 residues: Dihydroxy-acid dehydratase (618 aa).

Aspartate 81 contacts Mg(2+). Cysteine 122 is a [2Fe-2S] cluster binding site. Mg(2+) contacts are provided by aspartate 123 and lysine 124. Position 124 is an N6-carboxylysine (lysine 124). [2Fe-2S] cluster is bound at residue cysteine 197. Position 493 (glutamate 493) interacts with Mg(2+). Catalysis depends on serine 519, which acts as the Proton acceptor.

This sequence belongs to the IlvD/Edd family. Homodimer. [2Fe-2S] cluster is required as a cofactor. The cofactor is Mg(2+).

The catalysed reaction is (2R)-2,3-dihydroxy-3-methylbutanoate = 3-methyl-2-oxobutanoate + H2O. It catalyses the reaction (2R,3R)-2,3-dihydroxy-3-methylpentanoate = (S)-3-methyl-2-oxopentanoate + H2O. Its pathway is amino-acid biosynthesis; L-isoleucine biosynthesis; L-isoleucine from 2-oxobutanoate: step 3/4. The protein operates within amino-acid biosynthesis; L-valine biosynthesis; L-valine from pyruvate: step 3/4. Its function is as follows. Functions in the biosynthesis of branched-chain amino acids. Catalyzes the dehydration of (2R,3R)-2,3-dihydroxy-3-methylpentanoate (2,3-dihydroxy-3-methylvalerate) into 2-oxo-3-methylpentanoate (2-oxo-3-methylvalerate) and of (2R)-2,3-dihydroxy-3-methylbutanoate (2,3-dihydroxyisovalerate) into 2-oxo-3-methylbutanoate (2-oxoisovalerate), the penultimate precursor to L-isoleucine and L-valine, respectively. The polypeptide is Dihydroxy-acid dehydratase (Bordetella avium (strain 197N)).